A 291-amino-acid polypeptide reads, in one-letter code: MEAEKETEQEGNLTVMKLPVLPTKPNTHSHSMSSPIHSSISASVPFSWEEEPGKPKQHSTSSSSSSSSSPLTSYSSSPFETHKSLELPPRLHLLEKDGGSVTKLHSPITVFDGPYSMTTSKRMDSPSFRMMVKGSADCYGSFRSDIDGDLEDLEVGSKQQENLSSGSLAVVKKRGRLGFFGFRRRRALKGKTEFGRGSYVFPSSVDRESEYSRKEEEEEKEDKRFGYDDTDGISCSQSSRFCDVKISSISRTGSFSTLPAPPSSSSKSHFWTNVYAGLKQVVPWKSKKTTV.

A disordered region spans residues 1–82 (MEAEKETEQE…SYSSSPFETH (82 aa)). Low complexity-rich tracts occupy residues 28–43 (HSHS…ISAS) and 59–78 (STSS…SSSP).

This is an uncharacterized protein from Arabidopsis thaliana (Mouse-ear cress).